The primary structure comprises 85 residues: uncharacterized protein (85 aa).

The disordered stretch occupies residues 44-85 (EAHPSEHNGTVPRSLSQEWAKILAEEAEENSEENNDESEEDN). Residues 50 to 60 (HNGTVPRSLSQ) are compositionally biased toward polar residues. The span at 68–85 (EEAEENSEENNDESEEDN) shows a compositional bias: acidic residues.

This is an uncharacterized protein from Haloarcula hispanica (His1V).